Here is a 285-residue protein sequence, read N- to C-terminus: N(G),N(G)-dimethylarginine dimethylaminohydrolase 1 (285 aa).

Ala2 carries the post-translational modification N-acetylalanine. Position 30 (Leu30) interacts with substrate. Position 33 is a phosphoserine (Ser33). Substrate is bound by residues Asp73, Glu78, Asp79, Arg98, and Arg145. Catalysis depends on His173, which acts as the Proton donor. An S-nitrosocysteine modification is found at Cys222. Val268 contributes to the substrate binding site. Residue Cys274 is modified to S-nitrosocysteine. Cys274 functions as the Nucleophile in the catalytic mechanism. Cys274 lines the Zn(2+) pocket.

This sequence belongs to the DDAH family. As to quaternary structure, monomer. As to expression, detected in skeletal muscle, lung, heart, liver, kidney and brain (at protein level).

The catalysed reaction is N(omega),N(omega)-dimethyl-L-arginine + H2O = dimethylamine + L-citrulline. It catalyses the reaction N(omega)-methyl-L-arginine + H2O = L-citrulline + methylamine. With respect to regulation, inhibited by zinc ions. Hydrolyzes N(G),N(G)-dimethyl-L-arginine (ADMA) and N(G)-monomethyl-L-arginine (MMA) which act as inhibitors of NOS. Has therefore a role in the regulation of nitric oxide generation. The sequence is that of N(G),N(G)-dimethylarginine dimethylaminohydrolase 1 (Ddah1) from Mus musculus (Mouse).